A 513-amino-acid polypeptide reads, in one-letter code: Probable helicase MJ1565 (513 aa).

ATP-binding positions include Arg151, 160 to 165 (GMGKSN), and 467 to 468 (KV).

It belongs to the HerA family.

The enzyme catalyses Couples ATP hydrolysis with the unwinding of duplex DNA at the replication fork by translocating in the 5'-3' direction. This creates two antiparallel DNA single strands (ssDNA). The leading ssDNA polymer is the template for DNA polymerase III holoenzyme which synthesizes a continuous strand.. The catalysed reaction is ATP + H2O = ADP + phosphate + H(+). It catalyses the reaction Couples ATP hydrolysis with the unwinding of duplex DNA by translocating in the 3'-5' direction.. Functionally, a probably bidirectional DNA helicase. This Methanocaldococcus jannaschii (strain ATCC 43067 / DSM 2661 / JAL-1 / JCM 10045 / NBRC 100440) (Methanococcus jannaschii) protein is Probable helicase MJ1565.